A 181-amino-acid chain; its full sequence is Small ribosomal subunit protein uS4 (181 aa).

The S4 RNA-binding domain maps to 106-168; that stretch reads RRLQTLVYRK…PTSRIVKAKV (63 aa).

Belongs to the universal ribosomal protein uS4 family. As to quaternary structure, part of the 30S ribosomal subunit. Contacts protein S5. The interaction surface between S4 and S5 is involved in control of translational fidelity.

In terms of biological role, one of the primary rRNA binding proteins, it binds directly to 16S rRNA where it nucleates assembly of the body of the 30S subunit. Its function is as follows. With S5 and S12 plays an important role in translational accuracy. The protein is Small ribosomal subunit protein uS4 of Caldivirga maquilingensis (strain ATCC 700844 / DSM 13496 / JCM 10307 / IC-167).